Consider the following 153-residue polypeptide: Ribonuclease K3 (153 aa).

The signal sequence occupies residues 1 to 26 (MGPDLRCFPLLLLLLGLWWSVRPLCA). Asn30 carries an N-linked (GlcNAc...) asparagine glycan. His41 serves as the catalytic Proton acceptor. 4 cysteine pairs are disulfide-bonded: Cys49-Cys107, Cys63-Cys117, Cys81-Cys132, and Cys88-Cys95. An N-linked (GlcNAc...) asparagine glycan is attached at Asn58. 64-68 (KPQNT) is a binding site for substrate. Residue Asn85 is glycosylated (N-linked (GlcNAc...) asparagine). Position 89 (Lys89) interacts with substrate. The active-site Proton donor is the His148.

It belongs to the pancreatic ribonuclease family. As to quaternary structure, interacts (via N-terminus) with bacterial lipopolysaccharide (LPS). As to expression, kidney.

The protein resides in the secreted. It is found in the lysosome. It localises to the cytoplasmic granule. In terms of biological role, ribonuclease which shows a preference for the pyrimidines uridine and cytosine. Has potent antibacterial activity against a range of Gram-positive and Gram-negative bacteria, including P.aeruginosa, A.baumanii, M.luteus, S.aureus, E.faecalis, E.faecium, S.saprophyticus and E.coli. Causes loss of bacterial membrane integrity, and also promotes agglutination of Gram-negative bacteria. Probably contributes to urinary tract sterility. Bactericidal activity is independent of RNase activity. This Sus scrofa (Pig) protein is Ribonuclease K3 (RNASE6).